The sequence spans 398 residues: MSNKLVLVLNCGSSSLKFAIIDALTGDDQISGLAECFGLEDSRIKWKVDGNKFESKLGAFTAHREAVEFIVKEILGQYPDVAAQIQAIGHRVVHGGEKFTHSVVIDDSVIAGIEDCAALAPLHNPAHLIGIRAAQASFPGLPQVAVFDTAFHQTMPERAFVYALPYKLYREHGIRRYGMHGTSHLFVSREAAKALGKELADTNVICAHLGNGASVTAVKGGKSVDTSMGLTPLEGLVMGTRCGDIDPSIIYHLVDRLGYTLDEVNNLMNKQSGLLGISELTNDCRGIEEGYAEGHKGATLALEIFCYRLAKYIASYTVPLGRLDALVFTGGIGENSDLIREKVLNLLAIFNFEVDPARNQAARFGNQGQITTDNGPVAMVIPTNEEWVIAEDAVSLLK.

Asn-10 lines the Mg(2+) pocket. Lys-17 is an ATP binding site. Residue Arg-91 participates in substrate binding. Asp-148 acts as the Proton donor/acceptor in catalysis. Residues 208 to 212 (HLGNG), 283 to 285 (DCR), and 331 to 335 (GIGEN) each bind ATP. Glu-385 serves as a coordination point for Mg(2+).

This sequence belongs to the acetokinase family. As to quaternary structure, homodimer. Mg(2+) is required as a cofactor. Requires Mn(2+) as cofactor.

The protein localises to the cytoplasm. The catalysed reaction is acetate + ATP = acetyl phosphate + ADP. Its pathway is metabolic intermediate biosynthesis; acetyl-CoA biosynthesis; acetyl-CoA from acetate: step 1/2. Functionally, catalyzes the formation of acetyl phosphate from acetate and ATP. Can also catalyze the reverse reaction. This Shewanella loihica (strain ATCC BAA-1088 / PV-4) protein is Acetate kinase.